The following is a 323-amino-acid chain: Peroxidase 16 (323 aa).

The signal sequence occupies residues 1-23 (MKNQSSFSIVALLLIFFSSSVFA). Disulfide bonds link cysteine 34–cysteine 113, cysteine 67–cysteine 72, cysteine 119–cysteine 319, and cysteine 198–cysteine 230. Histidine 65 functions as the Proton acceptor in the catalytic mechanism. Residues aspartate 66, valine 69, glycine 71, aspartate 73, and serine 75 each contribute to the Ca(2+) site. Proline 161 lines the substrate pocket. Residue histidine 191 participates in heme b binding. Residue threonine 192 coordinates Ca(2+). Positions 243, 246, and 251 each coordinate Ca(2+).

This sequence belongs to the peroxidase family. Classical plant (class III) peroxidase subfamily. It depends on heme b as a cofactor. Ca(2+) is required as a cofactor. In terms of tissue distribution, expressed in the whole plant, but preferentially in roots and leaves.

The protein resides in the secreted. It catalyses the reaction 2 a phenolic donor + H2O2 = 2 a phenolic radical donor + 2 H2O. Its function is as follows. Removal of H(2)O(2), oxidation of toxic reductants, biosynthesis and degradation of lignin, suberization, auxin catabolism, response to environmental stresses such as wounding, pathogen attack and oxidative stress. These functions might be dependent on each isozyme/isoform in each plant tissue. The chain is Peroxidase 16 (PER16) from Arabidopsis thaliana (Mouse-ear cress).